We begin with the raw amino-acid sequence, 194 residues long: UPF0301 protein BT_0659 (194 aa).

This sequence belongs to the UPF0301 (AlgH) family.

The protein is UPF0301 protein BT_0659 of Bartonella tribocorum (strain CIP 105476 / IBS 506).